A 107-amino-acid chain; its full sequence is uncharacterized protein (107 aa).

This is an uncharacterized protein from Acanthamoeba polyphaga mimivirus (APMV).